We begin with the raw amino-acid sequence, 1486 residues long: Chromosome partition protein MukB (1486 aa).

Residue 34–41 (GGNGAGKS) coordinates ATP. Coiled-coil stretches lie at residues 326 to 418 (LEAD…QYNQ), 444 to 480 (LETFQAKELEATEKMLSLEQKMSMAQTAHSQFEQAYQ), and 509 to 603 (RHLA…RAPV). The interval 666 to 783 (PGGSEDQRLN…EVPLFGRAAR (118 aa)) is flexible hinge. Coiled-coil stretches lie at residues 835–923 (EAEI…AKLE), 977–1115 (EMLS…TAKA), and 1209–1266 (VEAI…QNVS).

It belongs to the SMC family. MukB subfamily. In terms of assembly, homodimerization via its hinge domain. Binds to DNA via its C-terminal region. Interacts, and probably forms a ternary complex, with MukE and MukF via its C-terminal region. The complex formation is stimulated by calcium or magnesium. Interacts with tubulin-related protein FtsZ.

Its subcellular location is the cytoplasm. It localises to the nucleoid. In terms of biological role, plays a central role in chromosome condensation, segregation and cell cycle progression. Functions as a homodimer, which is essential for chromosome partition. Involved in negative DNA supercoiling in vivo, and by this means organize and compact chromosomes. May achieve or facilitate chromosome segregation by condensation DNA from both sides of a centrally located replisome during cell division. The polypeptide is Chromosome partition protein MukB (Escherichia fergusonii (strain ATCC 35469 / DSM 13698 / CCUG 18766 / IAM 14443 / JCM 21226 / LMG 7866 / NBRC 102419 / NCTC 12128 / CDC 0568-73)).